Consider the following 159-residue polypeptide: uncharacterized protein (159 aa).

Belongs to the mimivirus L761/L899 family.

This is an uncharacterized protein from Acanthamoeba polyphaga mimivirus (APMV).